A 303-amino-acid polypeptide reads, in one-letter code: Coenzyme PQQ synthesis protein B (303 aa).

Belongs to the PqqB family.

It functions in the pathway cofactor biosynthesis; pyrroloquinoline quinone biosynthesis. Its function is as follows. May be involved in the transport of PQQ or its precursor to the periplasm. This is Coenzyme PQQ synthesis protein B from Pseudomonas fluorescens (strain SBW25).